Consider the following 369-residue polypeptide: Anhydro-N-acetylmuramic acid kinase (369 aa).

Residue 12–19 participates in ATP binding; it reads GTSMDGVD.

The protein belongs to the anhydro-N-acetylmuramic acid kinase family.

It catalyses the reaction 1,6-anhydro-N-acetyl-beta-muramate + ATP + H2O = N-acetyl-D-muramate 6-phosphate + ADP + H(+). The protein operates within amino-sugar metabolism; 1,6-anhydro-N-acetylmuramate degradation. It participates in cell wall biogenesis; peptidoglycan recycling. Catalyzes the specific phosphorylation of 1,6-anhydro-N-acetylmuramic acid (anhMurNAc) with the simultaneous cleavage of the 1,6-anhydro ring, generating MurNAc-6-P. Is required for the utilization of anhMurNAc either imported from the medium or derived from its own cell wall murein, and thus plays a role in cell wall recycling. The chain is Anhydro-N-acetylmuramic acid kinase from Shewanella sp. (strain MR-7).